A 229-amino-acid polypeptide reads, in one-letter code: 1-Cys peroxiredoxin PER1 (229 aa).

The Thioredoxin domain maps to 4 to 173; sequence LTIGDTVPNL…VLRAVDSLLT (170 aa). The Cysteine sulfenic acid (-SOH) intermediate role is filled by Cys46. Residues 205 to 228 carry the Bipartite nuclear localization signal motif; sequence RKMFPQGFETADLPSKKGYLRFTK.

The protein belongs to the peroxiredoxin family. Prx6 subfamily.

The protein resides in the nucleus. It localises to the cytoplasm. The catalysed reaction is a hydroperoxide + [thioredoxin]-dithiol = an alcohol + [thioredoxin]-disulfide + H2O. Thiol-specific peroxidase that catalyzes the reduction of hydrogen peroxide and organic hydroperoxides to water and alcohols, respectively. Seems to contribute to the inhibition of germination during stress. In Zea mays (Maize), this protein is 1-Cys peroxiredoxin PER1 (PER1).